The chain runs to 145 residues: Ribonuclease P protein component (145 aa).

Residues 119 to 145 (PLPAAPGTMPPARTVRPSSPSPTEPEL) form a disordered region.

This sequence belongs to the RnpA family. In terms of assembly, consists of a catalytic RNA component (M1 or rnpB) and a protein subunit.

It carries out the reaction Endonucleolytic cleavage of RNA, removing 5'-extranucleotides from tRNA precursor.. RNaseP catalyzes the removal of the 5'-leader sequence from pre-tRNA to produce the mature 5'-terminus. It can also cleave other RNA substrates such as 4.5S RNA. The protein component plays an auxiliary but essential role in vivo by binding to the 5'-leader sequence and broadening the substrate specificity of the ribozyme. The chain is Ribonuclease P protein component from Xanthomonas euvesicatoria pv. vesicatoria (strain 85-10) (Xanthomonas campestris pv. vesicatoria).